The primary structure comprises 31 residues: Relaxin B chain (31 aa).

Residue Q1 is modified to Pyrrolidone carboxylic acid.

This sequence belongs to the insulin family. In terms of assembly, heterodimer of a B chain and an A chain linked by two disulfide bonds.

It is found in the secreted. Functionally, relaxin is an ovarian hormone that acts with estrogen to produce dilatation of the birth canal in many mammals. This chain is Relaxin B chain, found in Phocoenoides dalli dalli (Dall's porpoise).